The chain runs to 806 residues: NADH-quinone oxidoreductase subunit G (806 aa).

The 79-residue stretch at 15-93 (EMVTLTIDGV…DMVVRTQLTS (79 aa)) folds into the 2Fe-2S ferredoxin-type domain. [2Fe-2S] cluster-binding residues include C49, C60, C63, and C77. In terms of domain architecture, 4Fe-4S His(Cys)3-ligated-type spans 95 to 134 (IADKAQHGVMELLLINHPLDCPMCDKGGECPLQNQAMSNG). Residues H111, C115, C118, C124, C164, C167, C170, C214, C240, C243, C247, and C275 each coordinate [4Fe-4S] cluster. Residues 233 to 289 (LVSSPSVCEHCASGCAQRTDHRRGKVLRRLAGDDPEVNEEWNCDKGRWAFTYATQPD) form the 4Fe-4S Mo/W bis-MGD-type domain.

This sequence belongs to the complex I 75 kDa subunit family. Requires [2Fe-2S] cluster as cofactor. It depends on [4Fe-4S] cluster as a cofactor.

It carries out the reaction a quinone + NADH + 5 H(+)(in) = a quinol + NAD(+) + 4 H(+)(out). Its function is as follows. NDH-1 shuttles electrons from NADH, via FMN and iron-sulfur (Fe-S) centers, to quinones in the respiratory chain. The immediate electron acceptor for the enzyme in this species is believed to be menaquinone. Couples the redox reaction to proton translocation (for every two electrons transferred, four hydrogen ions are translocated across the cytoplasmic membrane), and thus conserves the redox energy in a proton gradient. This Mycobacterium bovis (strain ATCC BAA-935 / AF2122/97) protein is NADH-quinone oxidoreductase subunit G (nuoG).